Reading from the N-terminus, the 223-residue chain is Probable Ras-related protein Rab-4A (223 aa).

16-23 lines the GTP pocket; sequence GNAGTGKT. The short motif at 38 to 46 is the Effector region element; the sequence is TQHTIGAEF. Residues 64–68 and 122–125 contribute to the GTP site; these read DTAGQ and NKKD. 2 S-geranylgeranyl cysteine lipidation sites follow: Cys221 and Cys223. Cys223 carries the post-translational modification Cysteine methyl ester.

Belongs to the small GTPase superfamily. Rab family.

The protein localises to the cell membrane. Protein transport. Probably involved in vesicular traffic. This Echinococcus multilocularis (Fox tapeworm) protein is Probable Ras-related protein Rab-4A.